The primary structure comprises 547 residues: Probable bifunctional tRNA threonylcarbamoyladenosine biosynthesis protein (547 aa).

The segment at Met-1–Trp-329 is kae1. Fe cation-binding residues include His-113, His-117, and Tyr-134. Residues Tyr-134–Ala-138, Asp-166, Gly-179, Glu-183, and Asn-262 contribute to the L-threonylcarbamoyladenylate site. Asp-290 is a binding site for Fe cation. In terms of domain architecture, Protein kinase spans Glu-340–Ala-547. ATP contacts are provided by residues Leu-355 to Ile-363 and Lys-377. The active-site Proton acceptor; for kinase activity is the Asp-464.

The protein in the N-terminal section; belongs to the KAE1 / TsaD family. In the C-terminal section; belongs to the protein kinase superfamily. Tyr protein kinase family. BUD32 subfamily. Component of the KEOPS complex that consists of Kae1, Bud32, Cgi121 and Pcc1; the whole complex dimerizes. The cofactor is Fe(2+).

Its subcellular location is the cytoplasm. The enzyme catalyses L-seryl-[protein] + ATP = O-phospho-L-seryl-[protein] + ADP + H(+). It carries out the reaction L-threonyl-[protein] + ATP = O-phospho-L-threonyl-[protein] + ADP + H(+). It catalyses the reaction L-threonylcarbamoyladenylate + adenosine(37) in tRNA = N(6)-L-threonylcarbamoyladenosine(37) in tRNA + AMP + H(+). Required for the formation of a threonylcarbamoyl group on adenosine at position 37 (t(6)A37) in tRNAs that read codons beginning with adenine. Is a component of the KEOPS complex that is probably involved in the transfer of the threonylcarbamoyl moiety of threonylcarbamoyl-AMP (TC-AMP) to the N6 group of A37. The Kae1 domain likely plays a direct catalytic role in this reaction. The Bud32 domain probably displays kinase activity that regulates Kae1 function. The chain is Probable bifunctional tRNA threonylcarbamoyladenosine biosynthesis protein from Methanosarcina acetivorans (strain ATCC 35395 / DSM 2834 / JCM 12185 / C2A).